A 327-amino-acid polypeptide reads, in one-letter code: Phenylalanine--tRNA ligase alpha subunit (327 aa).

Residue Glu-252 coordinates Mg(2+).

It belongs to the class-II aminoacyl-tRNA synthetase family. Phe-tRNA synthetase alpha subunit type 1 subfamily. As to quaternary structure, tetramer of two alpha and two beta subunits. Mg(2+) serves as cofactor.

The protein localises to the cytoplasm. It catalyses the reaction tRNA(Phe) + L-phenylalanine + ATP = L-phenylalanyl-tRNA(Phe) + AMP + diphosphate + H(+). The protein is Phenylalanine--tRNA ligase alpha subunit of Shigella flexneri.